The chain runs to 916 residues: Translation initiation factor IF-2 (916 aa).

Residues 58-317 (LEAEGHLPGA…GVTVPRGDGG (260 aa)) are disordered. A compositionally biased stretch (low complexity) spans 120-142 (EKVAASEAADAKPAAGAPADTAK). The segment covering 195–206 (SNIPRPAPPRPG) has biased composition (pro residues). 2 stretches are compositionally biased toward gly residues: residues 214 to 227 (RPGG…GGRP) and 235 to 282 (SAGG…GRGG). Positions 283–294 (GKSKARKSKRAK) are enriched in basic residues. Residues 409 to 583 (IRPPVVTVMG…LTADAGLDLR (175 aa)) form the tr-type G domain. The tract at residues 418–425 (GHVDHGKT) is G1. 418–425 (GHVDHGKT) provides a ligand contact to GTP. A G2 region spans residues 443–447 (GITQH). A G3 region spans residues 468-471 (DTPG). GTP contacts are provided by residues 468–472 (DTPGH) and 522–525 (NKVD). The tract at residues 522 to 525 (NKVD) is G4. The G5 stretch occupies residues 558-560 (SAR).

The protein belongs to the TRAFAC class translation factor GTPase superfamily. Classic translation factor GTPase family. IF-2 subfamily.

Its subcellular location is the cytoplasm. One of the essential components for the initiation of protein synthesis. Protects formylmethionyl-tRNA from spontaneous hydrolysis and promotes its binding to the 30S ribosomal subunits. Also involved in the hydrolysis of GTP during the formation of the 70S ribosomal complex. The chain is Translation initiation factor IF-2 from Leifsonia xyli subsp. xyli (strain CTCB07).